A 236-amino-acid polypeptide reads, in one-letter code: Sugar fermentation stimulation protein homolog (236 aa).

It belongs to the SfsA family.

This Paramagnetospirillum magneticum (strain ATCC 700264 / AMB-1) (Magnetospirillum magneticum) protein is Sugar fermentation stimulation protein homolog.